We begin with the raw amino-acid sequence, 212 residues long: FMN-dependent NADH:quinone oxidoreductase (212 aa).

FMN-binding positions include S10 and 17 to 19; that span reads SFS.

It belongs to the azoreductase type 1 family. As to quaternary structure, homodimer. It depends on FMN as a cofactor.

It carries out the reaction 2 a quinone + NADH + H(+) = 2 a 1,4-benzosemiquinone + NAD(+). The catalysed reaction is N,N-dimethyl-1,4-phenylenediamine + anthranilate + 2 NAD(+) = 2-(4-dimethylaminophenyl)diazenylbenzoate + 2 NADH + 2 H(+). In terms of biological role, quinone reductase that provides resistance to thiol-specific stress caused by electrophilic quinones. Its function is as follows. Also exhibits azoreductase activity. Catalyzes the reductive cleavage of the azo bond in aromatic azo compounds to the corresponding amines. This is FMN-dependent NADH:quinone oxidoreductase from Malacoplasma penetrans (strain HF-2) (Mycoplasma penetrans).